The following is an 838-amino-acid chain: Protein P (838 aa).

Residues 1–179 (MPLSYQHFRK…FCGSPYSWEQ (179 aa)) form a terminal protein domain (TP) region. The interval 180-341 (ELQHSQRHGD…YCLSHLVNLR (162 aa)) is spacer. A disordered region spans residues 219 to 245 (GLQPHQGPLASSQPGRSGSIRARAHPS). Residues 342-685 (EDWGPCDDHG…YMNLYPVARQ (344 aa)) form a polymerase/reverse transcriptase domain (RT) region. Residues 352-595 (EHHIRIPRTP…YSLNFMGYII (244 aa)) form the Reverse transcriptase domain. Mg(2+) contacts are provided by Asp-424, Asp-546, and Asp-547.

Belongs to the hepadnaviridae P protein family.

It carries out the reaction DNA(n) + a 2'-deoxyribonucleoside 5'-triphosphate = DNA(n+1) + diphosphate. It catalyses the reaction Endonucleolytic cleavage to 5'-phosphomonoester.. With respect to regulation, activated by host HSP70 and HSP40 in vitro to be able to bind the epsilon loop of the pgRNA. Because deletion of the RNase H region renders the protein partly chaperone-independent, the chaperones may be needed indirectly to relieve occlusion of the RNA-binding site by this domain. Inhibited by several reverse-transcriptase inhibitors: Lamivudine, Adefovir and Entecavir. Its function is as follows. Multifunctional enzyme that converts the viral RNA genome into dsDNA in viral cytoplasmic capsids. This enzyme displays a DNA polymerase activity that can copy either DNA or RNA templates, and a ribonuclease H (RNase H) activity that cleaves the RNA strand of RNA-DNA heteroduplexes in a partially processive 3'- to 5'-endonucleasic mode. Neo-synthesized pregenomic RNA (pgRNA) are encapsidated together with the P protein, and reverse-transcribed inside the nucleocapsid. Initiation of reverse-transcription occurs first by binding the epsilon loop on the pgRNA genome, and is initiated by protein priming, thereby the 5'-end of (-)DNA is covalently linked to P protein. Partial (+)DNA is synthesized from the (-)DNA template and generates the relaxed circular DNA (RC-DNA) genome. After budding and infection, the RC-DNA migrates in the nucleus, and is converted into a plasmid-like covalently closed circular DNA (cccDNA). The activity of P protein does not seem to be necessary for cccDNA generation, and is presumably released from (+)DNA by host nuclear DNA repair machinery. The protein is Protein P of Hepatitis B virus genotype A2 subtype adw (isolate Japan/Nishioka/1983) (HBV-A).